The following is a 383-amino-acid chain: MVQIFKFLLKSSKSTGRAHFRPTFLDTLRLAVRGGHGGNGLPKYGGVGGQGGCVYLVAKEGLTLRKVVQGLKDKRVAASSGEDSSKASIFGRRGADQRIEVPVGVQVYDDQQKLIADLDEHEATCIVAGGGTGGCTATNFLGRPGENRTVNLDLKLIADVGLVGFPNAGKSTLLKAVSNAKPKIAAYPFTTIRPQIGTIEYRDLRSITVADLPGLIEGAHANFGMGHKFLKHIERTRLLVFMVDIFGFQLSPKHPHRDCLANVYALNKELELYDPSLLEKPSVLLLNKMDKEGAHEIFTKVKPLVSDLASGLEQCPEELRPKQVLNFDSIVPISAMNSSKITQVKSQLRRTLVRLAEKQFLADEDQVKEKLRQRVGVVGPKIT.

Residues 22 to 157 (PTFLDTLRLA…RTVNLDLKLI (136 aa)) enclose the Obg domain. The OBG-type G domain maps to 158–353 (ADVGLVGFPN…VKSQLRRTLV (196 aa)). GTP contacts are provided by residues 164-171 (GFPNAGKS), 211-215 (DLPGL), and 287-290 (NKMD).

It belongs to the TRAFAC class OBG-HflX-like GTPase superfamily. OBG GTPase family.

It localises to the nucleus. It is found in the nucleolus. Functionally, may be involved in the ribosome maturation process. The polypeptide is GTP-binding protein 10 homolog (Drosophila melanogaster (Fruit fly)).